The following is a 690-amino-acid chain: Elongation factor G (690 aa).

A tr-type G domain is found at 8-282 (EKTRNIGIMA…AVVAYMPSPL (275 aa)). Residues 17-24 (AHIDAGKT), 81-85 (DTPGH), and 135-138 (NKMD) each bind GTP.

The protein belongs to the TRAFAC class translation factor GTPase superfamily. Classic translation factor GTPase family. EF-G/EF-2 subfamily.

Its subcellular location is the cytoplasm. Its function is as follows. Catalyzes the GTP-dependent ribosomal translocation step during translation elongation. During this step, the ribosome changes from the pre-translocational (PRE) to the post-translocational (POST) state as the newly formed A-site-bound peptidyl-tRNA and P-site-bound deacylated tRNA move to the P and E sites, respectively. Catalyzes the coordinated movement of the two tRNA molecules, the mRNA and conformational changes in the ribosome. The sequence is that of Elongation factor G from Alkaliphilus oremlandii (strain OhILAs) (Clostridium oremlandii (strain OhILAs)).